An 872-amino-acid chain; its full sequence is Chaperone protein ClpB 2 (872 aa).

The 143-residue stretch at 6–148 folds into the Clp R domain; the sequence is PNKFTEKAWE…AEIIKQIRGT (143 aa). Repeat stretches follow at residues 9-73 and 85-148; these read FTEK…IAQQ and LGRS…IRGT. Residues 161-342 are NBD1; sequence ESLEKYGRDL…RRFQEVLVDE (182 aa). 208–215 contacts ATP; that stretch reads GEPGVGKT. A linker region spans residues 343-551; that stretch reads PNVLDTISIL…IAEIISKWTG (209 aa). Residues 393–527 adopt a coiled-coil conformation; sequence IDLVDEAAAK…LETQLAEQQT (135 aa). The segment at 561–772 is NBD2; that stretch reads EKEKLLHLED…RVDETIIFHG (212 aa). 611-618 provides a ligand contact to ATP; the sequence is GPTGVGKT. The interval 773–872 is C-terminal; that stretch reads LQKSELRSIV…TSLRGDLVIV (100 aa).

This sequence belongs to the ClpA/ClpB family. In terms of assembly, homohexamer. The oligomerization is ATP-dependent.

It localises to the cytoplasm. Its function is as follows. Part of a stress-induced multi-chaperone system, it is involved in the recovery of the cell from heat-induced damage, in cooperation with DnaK, DnaJ and GrpE. Acts before DnaK, in the processing of protein aggregates. Protein binding stimulates the ATPase activity; ATP hydrolysis unfolds the denatured protein aggregates, which probably helps expose new hydrophobic binding sites on the surface of ClpB-bound aggregates, contributing to the solubilization and refolding of denatured protein aggregates by DnaK. The protein is Chaperone protein ClpB 2 (clpB2) of Synechocystis sp. (strain ATCC 27184 / PCC 6803 / Kazusa).